The primary structure comprises 205 residues: Guanylate kinase (205 aa).

The 180-residue stretch at 5–184 folds into the Guanylate kinase-like domain; sequence GLLIVLSGPS…AVQKIKGIVE (180 aa). 12-19 is a binding site for ATP; sequence GPSGVGKG.

Belongs to the guanylate kinase family.

It is found in the cytoplasm. It catalyses the reaction GMP + ATP = GDP + ADP. Essential for recycling GMP and indirectly, cGMP. This chain is Guanylate kinase, found in Listeria monocytogenes serotype 4b (strain F2365).